Reading from the N-terminus, the 362-residue chain is Probable S-adenosylmethionine-dependent methyltransferase At5g37990 (362 aa).

Positions 19, 66, 71, 107, 136, and 137 each coordinate S-adenosyl-L-homocysteine. Mg(2+) is bound by residues asparagine 175, glutamate 261, and phenylalanine 263.

The protein belongs to the methyltransferase superfamily. Type-7 methyltransferase family. Homodimer. It depends on Mg(2+) as a cofactor.

This chain is Probable S-adenosylmethionine-dependent methyltransferase At5g37990, found in Arabidopsis thaliana (Mouse-ear cress).